A 494-amino-acid chain; its full sequence is Serine/threonine-protein kinase cst-1 (494 aa).

The disordered stretch occupies residues 1–27 (MPPSTDSSRRNSEEGFSDGFKLDSSAL). A Protein kinase domain is found at 35–286 (FDIVGKLGEG…ALRLCEHTFI (252 aa)). Residues 41 to 49 (LGEGSYGSV) and K64 contribute to the ATP site. D154 serves as the catalytic Proton acceptor. The interval 364–413 (IPKSAYGSSRNNGSPRVQPPGHTASACDPSNNPPFAEEGTGPNFQIGTSE) is disordered. A compositionally biased stretch (polar residues) spans 369–378 (YGSSRNNGSP). The SARAH domain maps to 443-490 (FEFLRNITLDELIRRKESLDSEMEEEIRELQRRYKTKRQPILDVIEIK).

It belongs to the protein kinase superfamily. STE Ser/Thr protein kinase family. STE20 subfamily. The cofactor is Mg(2+). In terms of processing, proteolytically cleaved by caspase-3 during apoptosis which results in kinase activation.

The catalysed reaction is L-seryl-[protein] + ATP = O-phospho-L-seryl-[protein] + ADP + H(+). It catalyses the reaction L-threonyl-[protein] + ATP = O-phospho-L-threonyl-[protein] + ADP + H(+). Its function is as follows. Serine/threonine-protein kinase which extends lifespan and delays tissue aging, probably by activating daf-16. The protein is Serine/threonine-protein kinase cst-1 (cst-1) of Caenorhabditis briggsae.